We begin with the raw amino-acid sequence, 560 residues long: DNA-directed primase/polymerase protein (560 aa).

Residues 1 to 22 (MNRKWEAKLKQIEERASHYERK) are a coiled coil. Substrate contacts are provided by residues arginine 76, 114–116 (DLE), and 165–169 (KFSRH). Mn(2+)-binding residues include aspartate 114 and glutamate 116. Residues 203–223 (EDDDSAPETTGHGFPHFSEAP) are disordered. Serine 255 carries the post-translational modification Phosphoserine. Residues 288-291 (RNFR) and lysine 297 each bind substrate. Positions 419, 426, 446, and 451 each coordinate Zn(2+). Positions 419–452 (CENIGRAHKSNNIMILVDLKNEVWYQKCHDPVCK) match the Zinc knuckle motif motif. The disordered stretch occupies residues 480–507 (TTDEADETRSNETQNPHKPSPSRLSTGA). Residues 481 to 560 (TDEADETRSN…DELIIEVLQE (80 aa)) are interaction with RPA1. Residues 490–507 (NETQNPHKPSPSRLSTGA) are compositionally biased toward polar residues. 2 short sequence motifs (RPA1-binding motif) span residues 513–527 (WDNGIDDAYFLEATE) and 548–556 (EIPDELIIE).

This sequence belongs to the eukaryotic-type primase small subunit family. Interacts with RPA1; leading to recruitment to chromatin and stimulate DNA primase activity. Interacts with SSBP1. Interacts with POLDIP2; leading to enhance DNA polymerase activity. The cofactor is Mn(2+).

Its subcellular location is the nucleus. It is found in the mitochondrion matrix. The protein localises to the chromosome. It catalyses the reaction ssDNA + n NTP = ssDNA/pppN(pN)n-1 hybrid + (n-1) diphosphate.. The enzyme catalyses DNA(n) + a 2'-deoxyribonucleoside 5'-triphosphate = DNA(n+1) + diphosphate. Functionally, DNA primase and DNA polymerase required to tolerate replication-stalling lesions by bypassing them. Required to facilitate mitochondrial and nuclear replication fork progression by initiating de novo DNA synthesis using dNTPs and acting as an error-prone DNA polymerase able to bypass certain DNA lesions. Shows a high capacity to tolerate DNA damage lesions such as 8oxoG and abasic sites in DNA. Provides different translesion synthesis alternatives when DNA replication is stalled: able to synthesize DNA primers downstream of lesions, such as ultraviolet (UV) lesions, R-loops and G-quadruplexes, to allow DNA replication to continue. Can also realign primers ahead of 'unreadable lesions' such as abasic sites and 6-4 photoproduct (6-4 pyrimidine-pyrimidinone), thereby skipping the lesion. Repriming avoids fork degradation while leading to accumulation of internal ssDNA gaps behind the forks. Also able to incorporate nucleotides opposite DNA lesions such as 8oxoG, like a regular translesion synthesis DNA polymerase. Also required for reinitiating stalled forks after UV damage during nuclear DNA replication. Required for mitochondrial DNA (mtDNA) synthesis and replication, by reinitiating synthesis after UV damage or in the presence of chain-terminating nucleotides. Prevents APOBEC family-mediated DNA mutagenesis by repriming downstream of abasic site to prohibit error-prone translesion synthesis. Has non-overlapping function with POLH. In addition to its role in DNA damage response, also required to maintain efficient nuclear and mitochondrial DNA replication in unperturbed cells. The protein is DNA-directed primase/polymerase protein of Homo sapiens (Human).